Here is a 186-residue protein sequence, read N- to C-terminus: Elongation factor P (186 aa).

Belongs to the elongation factor P family.

Its subcellular location is the cytoplasm. Its pathway is protein biosynthesis; polypeptide chain elongation. Its function is as follows. Involved in peptide bond synthesis. Stimulates efficient translation and peptide-bond synthesis on native or reconstituted 70S ribosomes in vitro. Probably functions indirectly by altering the affinity of the ribosome for aminoacyl-tRNA, thus increasing their reactivity as acceptors for peptidyl transferase. This chain is Elongation factor P, found in Shewanella frigidimarina (strain NCIMB 400).